A 424-amino-acid polypeptide reads, in one-letter code: Protein CLP1 homolog (424 aa).

ATP-binding positions include glutamate 19, lysine 60, and 122–127; that span reads DVGKST.

It belongs to the Clp1 family. Clp1 subfamily.

It is found in the nucleus. Functionally, required for endonucleolytic cleavage during polyadenylation-dependent pre-mRNA 3'-end formation. This chain is Protein CLP1 homolog (cbc), found in Aedes aegypti (Yellowfever mosquito).